The chain runs to 907 residues: Valine--tRNA ligase (907 aa).

Positions 45-55 (PNVTGSLHMGH) match the 'HIGH' region motif. Positions 554-558 (KMSKS) match the 'KMSKS' region motif. Residue lysine 557 participates in ATP binding. Residues 838-870 (GQLIDLEAERARLMKDVSKIEQDIEKLSAKLSN) adopt a coiled-coil conformation.

The protein belongs to the class-I aminoacyl-tRNA synthetase family. ValS type 1 subfamily. In terms of assembly, monomer.

The protein resides in the cytoplasm. The catalysed reaction is tRNA(Val) + L-valine + ATP = L-valyl-tRNA(Val) + AMP + diphosphate. Its function is as follows. Catalyzes the attachment of valine to tRNA(Val). As ValRS can inadvertently accommodate and process structurally similar amino acids such as threonine, to avoid such errors, it has a 'posttransfer' editing activity that hydrolyzes mischarged Thr-tRNA(Val) in a tRNA-dependent manner. The sequence is that of Valine--tRNA ligase from Bartonella henselae (strain ATCC 49882 / DSM 28221 / CCUG 30454 / Houston 1) (Rochalimaea henselae).